Reading from the N-terminus, the 155-residue chain is 17.3 kDa class II heat shock protein (155 aa).

Residues 39 to 155 (DAKAMAATPA…KPKTIEVKVA (117 aa)) form the sHSP domain.

It belongs to the small heat shock protein (HSP20) family.

It is found in the cytoplasm. The polypeptide is 17.3 kDa class II heat shock protein (Solanum peruvianum (Peruvian tomato)).